The sequence spans 343 residues: Aspartate beta-hydroxylase domain-containing protein 2 (343 aa).

The Cytoplasmic segment spans residues 1-31 (MWLEWLVAWSWSLDGLRDCIATGIQSVRDCD). Residues 32 to 52 (GTAVITVACLLILFVWYCYHV) traverse the membrane as a helical segment. Over 53–343 (GREQPRPHVS…ALDFIFAPGR (291 aa)) the chain is Lumenal. N77 and N185 each carry an N-linked (GlcNAc...) asparagine glycan. 2-oxoglutarate is bound by residues W202 and S246. H257 lines the Fe cation pocket. 266–268 (RCH) is a 2-oxoglutarate binding site. H302 is a Fe cation binding site. R315 is a binding site for 2-oxoglutarate.

The protein belongs to the aspartyl/asparaginyl beta-hydroxylase family. It depends on Fe cation as a cofactor.

The protein localises to the membrane. Functionally, may function as 2-oxoglutarate-dependent dioxygenase. This is Aspartate beta-hydroxylase domain-containing protein 2 (Asphd2) from Mus musculus (Mouse).